The primary structure comprises 392 residues: Formate-dependent phosphoribosylglycinamide formyltransferase (392 aa).

N(1)-(5-phospho-beta-D-ribosyl)glycinamide-binding positions include 22 to 23 (EL) and Glu-82. ATP-binding positions include Arg-114, Lys-155, 160–165 (SSGKGQ), 195–198 (EGVV), and Glu-203. An ATP-grasp domain is found at 119–308 (RLAAEELGLP…EFALHVRAFL (190 aa)). 2 residues coordinate Mg(2+): Glu-267 and Glu-279. Residues Asp-286, Lys-355, and 362–363 (RR) each bind N(1)-(5-phospho-beta-D-ribosyl)glycinamide.

This sequence belongs to the PurK/PurT family. As to quaternary structure, homodimer.

The enzyme catalyses N(1)-(5-phospho-beta-D-ribosyl)glycinamide + formate + ATP = N(2)-formyl-N(1)-(5-phospho-beta-D-ribosyl)glycinamide + ADP + phosphate + H(+). The protein operates within purine metabolism; IMP biosynthesis via de novo pathway; N(2)-formyl-N(1)-(5-phospho-D-ribosyl)glycinamide from N(1)-(5-phospho-D-ribosyl)glycinamide (formate route): step 1/1. Involved in the de novo purine biosynthesis. Catalyzes the transfer of formate to 5-phospho-ribosyl-glycinamide (GAR), producing 5-phospho-ribosyl-N-formylglycinamide (FGAR). Formate is provided by PurU via hydrolysis of 10-formyl-tetrahydrofolate. This is Formate-dependent phosphoribosylglycinamide formyltransferase from Cronobacter sakazakii (strain ATCC BAA-894) (Enterobacter sakazakii).